A 335-amino-acid polypeptide reads, in one-letter code: Probable magnesium transporter NIPA1 (335 aa).

Residues 1–7 (MDQMSPD) are Extracellular-facing. A helical transmembrane segment spans residues 8 to 28 (NINGVILAVSSSIFIGSSFII). Residues 29–55 (KKKGLKKAGASGVRAGEGGYGYLKEPW) are Cytoplasmic-facing. The chain crosses the membrane as a helical span at residues 56–76 (WWAGMITMIVGEVANFAAYAF). The Extracellular portion of the chain corresponds to 77–79 (APA). Residues 80 to 100 (ILVTPLGALSIIFSAVLAHFI) form a helical membrane-spanning segment. The Cytoplasmic segment spans residues 101–104 (LKEK). Residues 105-125 (LHMFGILGCILCVVGSTTIVL) traverse the membrane as a helical segment. At 126–143 (HAPHEQKIESVKQIWQLA) the chain is on the extracellular side. The helical transmembrane segment at 144–164 (IEPGFLVYSAVIVIVVAILIF) threads the bilayer. Residues 165-179 (YYEPRYGKTHMIVYV) lie on the Cytoplasmic side of the membrane. A helical transmembrane segment spans residues 180-200 (GICSLMGSLTVMSVKAVAIAI). The Extracellular portion of the chain corresponds to 201 to 212 (KLTFSGTNQFKY). The helical transmembrane segment at 213 to 233 (FNTWIFILVVATCCILQINYL) threads the bilayer. Residues 234–244 (NKALDTFNTAV) lie on the Cytoplasmic side of the membrane. The chain crosses the membrane as a helical span at residues 245-265 (ISPVYYVMFTTFTIIASMIMF). Over 266–272 (KDWASQS) the chain is Extracellular. Residues 273–293 (GLKIATELCGFVTILSGTFLL) traverse the membrane as a helical segment. Residues 294-335 (HKTKDMGNSASGRGSISMPTRDTPVFTNSGSGRSSSSDKVAS) are Cytoplasmic-facing. The segment covering 303–321 (ASGRGSISMPTRDTPVFTN) has biased composition (polar residues). The interval 303 to 335 (ASGRGSISMPTRDTPVFTNSGSGRSSSSDKVAS) is disordered. Residues 322 to 335 (SGSGRSSSSDKVAS) are compositionally biased toward low complexity.

It belongs to the NIPA (TC 2.A.7) family. In terms of assembly, homodimer.

It localises to the cell membrane. The protein localises to the early endosome. Acts as a Mg(2+) transporter. Can also transport other divalent cations such as Fe(2+), Sr(2+), Ba(2+), Mn(2+) and Co(2+) but to a much less extent than Mg(2+). This Arabidopsis thaliana (Mouse-ear cress) protein is Probable magnesium transporter NIPA1.